The following is a 94-amino-acid chain: Putative pterin-4-alpha-carbinolamine dehydratase (94 aa).

This sequence belongs to the pterin-4-alpha-carbinolamine dehydratase family.

The enzyme catalyses (4aS,6R)-4a-hydroxy-L-erythro-5,6,7,8-tetrahydrobiopterin = (6R)-L-erythro-6,7-dihydrobiopterin + H2O. In Mycobacterium sp. (strain JLS), this protein is Putative pterin-4-alpha-carbinolamine dehydratase.